The following is a 596-amino-acid chain: Protein Malvolio (596 aa).

The segment at 1–34 (MSSNEAYHEPGAGGDGPGGSSGASGGGSQRSNQL) is disordered. Positions 11 to 28 (GAGGDGPGGSSGASGGGS) are enriched in gly residues. Asn-41 carries an N-linked (GlcNAc...) asparagine glycan. 7 helical membrane-spanning segments follow: residues 77–97 (LWAFTGPGFLMSIAYLDPGNI), 105–125 (AAAKYKILWVLLWATVLGLLM), 154–174 (WILWIMIEIAIIGSDMQEVIG), 186–206 (VVPLWGGVLITIVDTFTFLFL), 216–236 (FLFGTLITIMAVSFGYEYIVS), 263–283 (AVGVVGAVIMPHNLYLHSALV), and 309–329 (VALFVSFIINLFVVAVFAHGM). Asn-359 carries an N-linked (GlcNAc...) asparagine glycan. 5 helical membrane-spanning segments follow: residues 373–393 (LFLGCTFGAVAMYIWGVGILA), 424–444 (VLVTRCIAIIPTFCLAMFSKM), 463–483 (PFAAIPTIAFTSCAAIMGEFV), 490–510 (IVSILLTIVVIGVNLYFVVVQ), and 520–540 (LLALVCIFAILYILFNLYLVI). Asn-574 carries an N-linked (GlcNAc...) asparagine glycan.

This sequence belongs to the NRAMP family. Expressed in macrophages and in the nervous system.

The protein localises to the membrane. Putative transporter required for normal taste behavior. May be a nitrite/nitrate transporter. The polypeptide is Protein Malvolio (Mvl) (Drosophila melanogaster (Fruit fly)).